We begin with the raw amino-acid sequence, 205 residues long: Suppressor of silencing 2b (205 aa).

A disordered region spans residues 23–52 (SEPQPSTTESRPSMPPINSGKPSVTEKPGV).

This sequence belongs to the cucumovirus/ilarvirus protein 2b family.

The protein localises to the host nucleus. In terms of biological role, acts as a suppressor of RNA-mediated gene silencing, also known as post-transcriptional gene silencing (PTGS), a mechanism of plant viral defense that limits the accumulation of viral RNAs. May directly interfere with the mobile silencing signal. This is Suppressor of silencing 2b from Tobacco streak virus (strain WC) (TSV).